We begin with the raw amino-acid sequence, 44 residues long: Photosystem II reaction center protein K (44 aa).

The propeptide occupies 1-7 (MTTLLLA). The helical transmembrane segment at 19-39 (IVDVLPVIPLLFLLLAFVWQA) threads the bilayer.

Belongs to the PsbK family. As to quaternary structure, PSII is composed of 1 copy each of membrane proteins PsbA, PsbB, PsbC, PsbD, PsbE, PsbF, PsbH, PsbI, PsbJ, PsbK, PsbL, PsbM, PsbT, PsbX, PsbY, PsbZ, Psb30/Ycf12, at least 3 peripheral proteins of the oxygen-evolving complex and a large number of cofactors. It forms dimeric complexes.

The protein resides in the plastid. The protein localises to the chloroplast thylakoid membrane. In terms of biological role, one of the components of the core complex of photosystem II (PSII). PSII is a light-driven water:plastoquinone oxidoreductase that uses light energy to abstract electrons from H(2)O, generating O(2) and a proton gradient subsequently used for ATP formation. It consists of a core antenna complex that captures photons, and an electron transfer chain that converts photonic excitation into a charge separation. This Tupiella akineta (Green alga) protein is Photosystem II reaction center protein K.